The following is a 936-amino-acid chain: Isoleucine--tRNA ligase (936 aa).

The 'HIGH' region signature appears at 58-68; sequence PYANGRAHLGT. E561 provides a ligand contact to L-isoleucyl-5'-AMP. Positions 602–606 match the 'KMSKS' region motif; it reads KMSKS. K605 contributes to the ATP binding site. Positions 899, 902, 919, and 922 each coordinate Zn(2+).

The protein belongs to the class-I aminoacyl-tRNA synthetase family. IleS type 1 subfamily. In terms of assembly, monomer. Requires Zn(2+) as cofactor.

Its subcellular location is the cytoplasm. The enzyme catalyses tRNA(Ile) + L-isoleucine + ATP = L-isoleucyl-tRNA(Ile) + AMP + diphosphate. Its function is as follows. Catalyzes the attachment of isoleucine to tRNA(Ile). As IleRS can inadvertently accommodate and process structurally similar amino acids such as valine, to avoid such errors it has two additional distinct tRNA(Ile)-dependent editing activities. One activity is designated as 'pretransfer' editing and involves the hydrolysis of activated Val-AMP. The other activity is designated 'posttransfer' editing and involves deacylation of mischarged Val-tRNA(Ile). This chain is Isoleucine--tRNA ligase, found in Coxiella burnetii (strain RSA 331 / Henzerling II).